The primary structure comprises 253 residues: Protein C1orf43 homolog (253 aa).

The helical transmembrane segment at 11-31 (VNVVLVMAYGSLVFVLLFIFV) threads the bilayer. A disordered region spans residues 194-213 (SGSSQRQHQSAAKDLTQSPE).

It is found in the membrane. The protein resides in the golgi apparatus. It localises to the mitochondrion. In terms of biological role, general regulator of phagocytosis. Required to uptake Gram negative bacterium by macrophages. The chain is Protein C1orf43 homolog from Bos taurus (Bovine).